The following is a 283-amino-acid chain: MNPYVEIIRPGNVIMAIIAVILVAILAKSVDIPIILAMLAVFFAMSAGNVINDYFDYKIDLINKPQRPIPSGRISLDNAKNYAYLLFILAAIVGFLISCLVDTWIPCTIVIFSDIILYLYAYKLKSTPLIGNLTVGFMTGLCFIFAGYTFNEGLIIYESYLLAFFALIMTTAREITKDIEDMEGDMAEGAKTFPILYGPKISAIIAISLIIIDCALCPLLYIYHIFNINYLIVVSIAVLIFLYGAVLLRNQDSKTANKVSKYLKTGMLIAFIAFAIGTFTITF.

A run of 8 helical transmembrane segments spans residues 5-27, 37-57, 85-105, 128-148, 152-172, 203-223, 228-248, and 263-283; these read VEIIRPGNVIMAIIAVILVAILA, AMLAVFFAMSAGNVINDYFDY, LLFILAAIVGFLISCLVDTWI, PLIGNLTVGFMTGLCFIFAGY, EGLIIYESYLLAFFALIMTTA, AIIAISLIIIDCALCPLLYIY, INYLIVVSIAVLIFLYGAVLL, and LKTGMLIAFIAFAIGTFTITF.

This sequence belongs to the UbiA prenyltransferase family. DGGGP synthase subfamily. Requires Mg(2+) as cofactor.

It is found in the cell membrane. It carries out the reaction sn-3-O-(geranylgeranyl)glycerol 1-phosphate + (2E,6E,10E)-geranylgeranyl diphosphate = 2,3-bis-O-(geranylgeranyl)-sn-glycerol 1-phosphate + diphosphate. It participates in membrane lipid metabolism; glycerophospholipid metabolism. In terms of biological role, prenyltransferase that catalyzes the transfer of the geranylgeranyl moiety of geranylgeranyl diphosphate (GGPP) to the C2 hydroxyl of (S)-3-O-geranylgeranylglyceryl phosphate (GGGP). This reaction is the second ether-bond-formation step in the biosynthesis of archaeal membrane lipids. The chain is Digeranylgeranylglyceryl phosphate synthase from Methanobrevibacter smithii (strain ATCC 35061 / DSM 861 / OCM 144 / PS).